The chain runs to 295 residues: Phosphoribosylaminoimidazole-succinocarboxamide synthase (295 aa).

It belongs to the SAICAR synthetase family.

It carries out the reaction 5-amino-1-(5-phospho-D-ribosyl)imidazole-4-carboxylate + L-aspartate + ATP = (2S)-2-[5-amino-1-(5-phospho-beta-D-ribosyl)imidazole-4-carboxamido]succinate + ADP + phosphate + 2 H(+). It participates in purine metabolism; IMP biosynthesis via de novo pathway; 5-amino-1-(5-phospho-D-ribosyl)imidazole-4-carboxamide from 5-amino-1-(5-phospho-D-ribosyl)imidazole-4-carboxylate: step 1/2. In Desulforapulum autotrophicum (strain ATCC 43914 / DSM 3382 / VKM B-1955 / HRM2) (Desulfobacterium autotrophicum), this protein is Phosphoribosylaminoimidazole-succinocarboxamide synthase.